Here is a 469-residue protein sequence, read N- to C-terminus: Ubiquitin carboxyl-terminal hydrolase MINDY-1 (469 aa).

Residues 1–85 (MEYHQPEDPA…APPGPTLGTL (85 aa)) are disordered. Basic and acidic residues predominate over residues 23-53 (ENHEVLAGPDEHPQDTDARDADGEAREREPA). Residues 66–76 (LESPLPEASSA) are compositionally biased toward low complexity. Ser103 carries the phosphoserine modification. Cys137 (nucleophile) is an active-site residue. The active-site Proton acceptor is His319. Residues 388–426 (QVDQDYLIALSLQQQQPRGPLGLTDLELAQQLQQEEYQQ) are ubiquitin-binding domain (UBD). Ser441 carries the post-translational modification Phosphoserine. The tract at residues 441–469 (SLQGRGATSGRPAGERRQRPKHESDCILL) is disordered. Over residues 453-469 (AGERRQRPKHESDCILL) the composition is skewed to basic and acidic residues.

The protein belongs to the MINDY deubiquitinase family. FAM63 subfamily.

It carries out the reaction Thiol-dependent hydrolysis of ester, thioester, amide, peptide and isopeptide bonds formed by the C-terminal Gly of ubiquitin (a 76-residue protein attached to proteins as an intracellular targeting signal).. Its function is as follows. Hydrolase that can specifically remove 'Lys-48'-linked conjugated ubiquitin from proteins. Has exodeubiquitinase activity and has a preference for long polyubiquitin chains. May play a regulatory role at the level of protein turnover. The chain is Ubiquitin carboxyl-terminal hydrolase MINDY-1 from Homo sapiens (Human).